The sequence spans 160 residues: Nucleotide-binding protein Noc_2254 (160 aa).

It belongs to the YajQ family.

Functionally, nucleotide-binding protein. The chain is Nucleotide-binding protein Noc_2254 from Nitrosococcus oceani (strain ATCC 19707 / BCRC 17464 / JCM 30415 / NCIMB 11848 / C-107).